Consider the following 253-residue polypeptide: Ditrans,polycis-undecaprenyl-diphosphate synthase ((2E,6E)-farnesyl-diphosphate specific) (253 aa).

D26 is an active-site residue. D26 contacts Mg(2+). Substrate contacts are provided by residues 27–30 (GNGR), W31, R39, H43, and 71–73 (SSE). N74 serves as the catalytic Proton acceptor. 3 residues coordinate substrate: W75, R77, and R194. A Mg(2+)-binding site is contributed by H199. Substrate is bound at residue 200–202 (RIS). E213 serves as a coordination point for Mg(2+).

Belongs to the UPP synthase family. Homodimer. Mg(2+) serves as cofactor.

The enzyme catalyses 8 isopentenyl diphosphate + (2E,6E)-farnesyl diphosphate = di-trans,octa-cis-undecaprenyl diphosphate + 8 diphosphate. In terms of biological role, catalyzes the sequential condensation of isopentenyl diphosphate (IPP) with (2E,6E)-farnesyl diphosphate (E,E-FPP) to yield (2Z,6Z,10Z,14Z,18Z,22Z,26Z,30Z,34E,38E)-undecaprenyl diphosphate (di-trans,octa-cis-UPP). UPP is the precursor of glycosyl carrier lipid in the biosynthesis of bacterial cell wall polysaccharide components such as peptidoglycan and lipopolysaccharide. The sequence is that of Ditrans,polycis-undecaprenyl-diphosphate synthase ((2E,6E)-farnesyl-diphosphate specific) from Shigella flexneri.